We begin with the raw amino-acid sequence, 441 residues long: tRNA-2-methylthio-N(6)-dimethylallyladenosine synthase (441 aa).

Residues 3–119 (KKVSIRTFGC…LPGLIRNAFQ (117 aa)) enclose the MTTase N-terminal domain. [4Fe-4S] cluster contacts are provided by C12, C48, C82, C155, C159, and C162. Residues 141-371 (RSGSISAFIP…IDLQSGISGE (231 aa)) enclose the Radical SAM core domain. A TRAM domain is found at 374 to 437 (GNDVGSVQEV…QATLIGRCQD (64 aa)).

It belongs to the methylthiotransferase family. MiaB subfamily. As to quaternary structure, monomer. [4Fe-4S] cluster serves as cofactor.

The protein resides in the cytoplasm. The catalysed reaction is N(6)-dimethylallyladenosine(37) in tRNA + (sulfur carrier)-SH + AH2 + 2 S-adenosyl-L-methionine = 2-methylsulfanyl-N(6)-dimethylallyladenosine(37) in tRNA + (sulfur carrier)-H + 5'-deoxyadenosine + L-methionine + A + S-adenosyl-L-homocysteine + 2 H(+). In terms of biological role, catalyzes the methylthiolation of N6-(dimethylallyl)adenosine (i(6)A), leading to the formation of 2-methylthio-N6-(dimethylallyl)adenosine (ms(2)i(6)A) at position 37 in tRNAs that read codons beginning with uridine. This chain is tRNA-2-methylthio-N(6)-dimethylallyladenosine synthase, found in Prosthecochloris aestuarii (strain DSM 271 / SK 413).